A 793-amino-acid polypeptide reads, in one-letter code: Toll-like receptor 2 type-1 (793 aa).

The N-terminal stretch at 1–25 (MFNQSKQKPTMKLMWQAWLIYTALA) is a signal peptide. The Extracellular portion of the chain corresponds to 26–597 (AHLPEEQALR…QLSLMECHRS (572 aa)). The cysteines at positions 41 and 47 are disulfide-linked. Asparagine 48 carries N-linked (GlcNAc...) asparagine glycosylation. LRR repeat units follow at residues 64-85 (KITV…DLQK), 88-109 (NLRT…SFGS), 112-133 (KLEL…WFGP), 136-157 (SLQH…SPFS), 161-182 (NLSS…NFEG), and 185-206 (FLNT…SLKS). N-linked (GlcNAc...) asparagine glycosylation occurs at asparagine 120. N-linked (GlcNAc...) asparagine glycans are attached at residues asparagine 161, asparagine 195, asparagine 254, and asparagine 325. Cysteines 362 and 391 form a disulfide. LRR repeat units follow at residues 370-391 (SLLY…ETIC), 397-418 (SLQT…ARYI), 423-444 (KLIN…CEWP), 446-467 (NLKY…IPST), 468-486 (LEVL…LQLP), 487-508 (FLKE…TDIP), and 509-530 (NLVA…EFES). Residue asparagine 402 is glycosylated (N-linked (GlcNAc...) asparagine). A disulfide bridge connects residues cysteine 441 and cysteine 463. A glycan (N-linked (GlcNAc...) asparagine) is linked at asparagine 451. Residues 542–596 (NNFICSCEFLSFIHHEAGIAQVLVGWPESYICDSPLTVRGAQVGSVQLSLMECHR) form the LRRCT domain. A helical transmembrane segment spans residues 598–618 (LLVSLICTLVFLFILILVVVG). Residues 619–793 (YKYHAVWYMR…WENLKAALKS (175 aa)) are Cytoplasmic-facing. The TIR domain occupies 648–791 (ICYDAFVSYS…MFWENLKAAL (144 aa)).

It belongs to the Toll-like receptor family. In terms of assembly, binds MYD88 (via TIR domain). In terms of processing, N-glycosylated. TLR2-1 is more heavily glycosylated than TLR2-2. As to expression, highly expressed in ovary. Detected at lower levels in heart, lung, gizzard and testis.

It is found in the membrane. Its function is as follows. Participates in the innate immune response to microbial agents. Acts via MYD88 and TRAF6, leading to NF-kappa-B activation, cytokine secretion and the inflammatory response. Does not respond to LPS and responds with less ability than TLR2-2 to mycoplasmal macrophage-activating lipopeptide-2kD (MALP-2). The polypeptide is Toll-like receptor 2 type-1 (TLR2-1) (Gallus gallus (Chicken)).